A 208-amino-acid polypeptide reads, in one-letter code: Outer-membrane lipoprotein carrier protein (208 aa).

The first 22 residues, 1-22 (MRKTLSILAISLPLLVSGYAQA), serve as a signal peptide directing secretion.

Belongs to the LolA family. As to quaternary structure, monomer.

Its subcellular location is the periplasm. Functionally, participates in the translocation of lipoproteins from the inner membrane to the outer membrane. Only forms a complex with a lipoprotein if the residue after the N-terminal Cys is not an aspartate (The Asp acts as a targeting signal to indicate that the lipoprotein should stay in the inner membrane). The polypeptide is Outer-membrane lipoprotein carrier protein (Shewanella sediminis (strain HAW-EB3)).